The following is a 177-amino-acid chain: Large ribosomal subunit protein uL6 (177 aa).

It belongs to the universal ribosomal protein uL6 family. In terms of assembly, part of the 50S ribosomal subunit.

Its function is as follows. This protein binds to the 23S rRNA, and is important in its secondary structure. It is located near the subunit interface in the base of the L7/L12 stalk, and near the tRNA binding site of the peptidyltransferase center. The polypeptide is Large ribosomal subunit protein uL6 (Paracidovorax citrulli (strain AAC00-1) (Acidovorax citrulli)).